We begin with the raw amino-acid sequence, 308 residues long: Ribonuclease HIII (308 aa).

One can recognise an RNase H type-2 domain in the interval 91–308 (KNVIGSDEVG…TEKALKMVKK (218 aa)). A divalent metal cation is bound by residues D97, E98, and D202.

Belongs to the RNase HII family. RnhC subfamily. Mn(2+) is required as a cofactor. Requires Mg(2+) as cofactor.

The protein localises to the cytoplasm. The catalysed reaction is Endonucleolytic cleavage to 5'-phosphomonoester.. Endonuclease that specifically degrades the RNA of RNA-DNA hybrids. In Listeria monocytogenes serotype 4b (strain CLIP80459), this protein is Ribonuclease HIII.